The chain runs to 218 residues: MERQGVDVPHVKCKDQEPQPLGESKEHPRWEENCEEEAGGGPASASCQLTVLEGKSGLYFSSLDSSIDILQKRAQELIENINKSRQKDHALMTNFRNSLKTKVSDLTEKLEERIYQIYNDHNKIIQEKLQEFTQKMAKISHLETELKQVCHSVETVYKDLCLQPEQSLRLRWGPDHSRGKSPPRPGNSQPPDVFVSSVAETTSQATASEVQTNRDGEC.

Over residues 1-32 (MERQGVDVPHVKCKDQEPQPLGESKEHPRWEE) the composition is skewed to basic and acidic residues. The segment at 1 to 42 (MERQGVDVPHVKCKDQEPQPLGESKEHPRWEENCEEEAGGGP) is disordered. A coiled-coil region spans residues 61–87 (SSLDSSIDILQKRAQELIENINKSRQK). Residues 171-218 (RWGPDHSRGKSPPRPGNSQPPDVFVSSVAETTSQATASEVQTNRDGEC) are disordered. The span at 198 to 211 (VAETTSQATASEVQ) shows a compositional bias: polar residues.

This sequence belongs to the SYCE family. As to quaternary structure, homodimer. Found in a complex with SYCP1 and SYCE1. Interacts with SYCP1, SYCE1 and SYCE3. Interacts with TEX12.

It is found in the nucleus. The protein resides in the chromosome. In terms of biological role, major component of the transverse central element of synaptonemal complexes (SCS), formed between homologous chromosomes during meiotic prophase. Requires SYCP1 in order to be incorporated into the central element. May have a role in the synaptonemal complex assembly, stabilization and recombination. The chain is Synaptonemal complex central element protein 2 (SYCE2) from Homo sapiens (Human).